The chain runs to 364 residues: Guanine nucleotide-binding protein alpha-6 subunit (364 aa).

The interval 1 to 29 (MGAGATGLRGARLSPEERANSSKSRAIDR) is disordered. Gly-2 is lipidated: N-myristoyl glycine. The segment covering 14–29 (SPEERANSSKSRAIDR) has biased composition (basic and acidic residues). The 324-residue stretch at 40–363 (NRFKILLLGT…NENLRSAGLH (324 aa)) folds into the G-alpha domain. A G1 motif region spans residues 43–56 (KILLLGTAESGKST). GTP contacts are provided by residues 48 to 55 (GTAESGKS), 186 to 192 (VHCRIST), 211 to 215 (DVGGQ), 280 to 283 (NKYD), and Ala-335. Mg(2+) contacts are provided by Ser-55 and Thr-192. A G2 motif region spans residues 184 to 192 (DIVHCRIST). The segment at 207-216 (FKMVDVGGQR) is G3 motif. Residues 276–283 (VLFLNKYD) are G4 motif. The G5 motif stretch occupies residues 333-338 (TTATDT).

The protein belongs to the G-alpha family. G proteins are composed of 3 units; alpha, beta and gamma. The alpha chain contains the guanine nucleotide binding site.

Its function is as follows. Guanine nucleotide-binding proteins (G proteins) are involved as modulators or transducers in various transmembrane signaling systems. The chain is Guanine nucleotide-binding protein alpha-6 subunit (gpa-6) from Caenorhabditis elegans.